The sequence spans 203 residues: Secreted phosphoprotein 24 (203 aa).

An N-terminal signal peptide occupies residues 1 to 23 (MELATMKTLVMLVLGMHYWCASG). 2 disulfides stabilise this stretch: cysteine 86–cysteine 96 and cysteine 109–cysteine 127. Position 90 is a phosphoserine (serine 90). Serine 137, serine 138, and serine 174 each carry phosphoserine.

It belongs to the SPP2 family. In terms of processing, multiply phosphorylated at serine residues. Phosphorylation sites are present in the extracellular medium.

It localises to the secreted. Could coordinate an aspect of bone turnover. The protein is Secreted phosphoprotein 24 (Spp2) of Rattus norvegicus (Rat).